Consider the following 555-residue polypeptide: Formate--tetrahydrofolate ligase (555 aa).

Residue 63–70 (TPAGEGKT) coordinates ATP.

This sequence belongs to the formate--tetrahydrofolate ligase family.

The enzyme catalyses (6S)-5,6,7,8-tetrahydrofolate + formate + ATP = (6R)-10-formyltetrahydrofolate + ADP + phosphate. It participates in one-carbon metabolism; tetrahydrofolate interconversion. The chain is Formate--tetrahydrofolate ligase from Beijerinckia indica subsp. indica (strain ATCC 9039 / DSM 1715 / NCIMB 8712).